The sequence spans 1162 residues: Integrin alpha-L (1162 aa).

A signal peptide spans 1-23; that stretch reads MSFRIAGPRLLLLGLQLFAKAWS. The Extracellular segment spans residues 24-1088; sequence YNLDTRPTQS…DLIHEKEMLH (1065 aa). FG-GAP repeat units lie at residues 28–79 and 80–138; these read TRPT…FCQP and VSLH…GPML. A disulfide bridge connects residues cysteine 70 and cysteine 77. A glycan (N-linked (GlcNAc...) asparagine) is linked at asparagine 86. 2 disulfide bridges follow: cysteine 108–cysteine 126 and cysteine 147–cysteine 199. In terms of domain architecture, VWFA spans 153 to 325; the sequence is DLVFLFDGSQ…EKLKDLFTDL (173 aa). 2 N-linked (GlcNAc...) asparagine glycosylation sites follow: asparagine 185 and asparagine 270. FG-GAP repeat units follow at residues 336 to 387, 390 to 443, 444 to 504, 505 to 561, and 565 to 625; these read NRQD…GATF, QEPL…GGRW, NQTQ…LFEM, VSEL…GLSP, and QRIQ…FSPE. Asparagine 444 is a glycosylation site (N-linked (GlcNAc...) asparagine). Ca(2+)-binding residues include aspartate 466, aspartate 468, aspartate 470, glutamate 474, aspartate 528, asparagine 530, aspartate 532, aspartate 536, aspartate 588, aspartate 592, and aspartate 596. A disulfide bridge links cysteine 651 with cysteine 705. Residues asparagine 668, asparagine 696, asparagine 724, and asparagine 728 are each glycosylated (N-linked (GlcNAc...) asparagine). The cysteines at positions 768 and 774 are disulfide-linked. Asparagine 777 carries N-linked (GlcNAc...) asparagine glycosylation. Cysteines 841 and 857 form a disulfide. Asparagine 858, asparagine 881, asparagine 891, asparagine 900, and asparagine 928 each carry an N-linked (GlcNAc...) asparagine glycan. 2 disulfides stabilise this stretch: cysteine 994–cysteine 1010 and cysteine 1018–cysteine 1049. An N-linked (GlcNAc...) asparagine glycan is attached at asparagine 1057. A helical transmembrane segment spans residues 1089–1109; sequence VYVLSGIGGLVLLFLIFLALY. Residues 1110–1162 lie on the Cytoplasmic side of the membrane; sequence KVGFFKRNLKEKMEADGGVPNGSPPEDTDPLAVPGEETKDMGCLEPLRESDKD. The GFFKR motif signature appears at 1112–1116; that stretch reads GFFKR. The tract at residues 1124-1162 is disordered; it reads ADGGVPNGSPPEDTDPLAVPGEETKDMGCLEPLRESDKD. Residues 1145 to 1162 show a composition bias toward basic and acidic residues; sequence EETKDMGCLEPLRESDKD.

The protein belongs to the integrin alpha chain family. As to quaternary structure, heterodimer of an alpha and a beta subunit. The ITGAL alpha subunit associates with the ITGB2 beta subunit. Interacts with THBD. Interacts with CD226. In resting T-cells, up to 40% of surface ITGAL is constitutively phosphorylated. Phosphorylation causes conformational changes needed for ligand binding and is necessary for the activation by some physiological agents. Leukocytes.

It is found in the cell membrane. Integrin ITGAL/ITGB2 is a receptor for ICAM1, ICAM2, ICAM3 and ICAM4. Integrin ITGAL/ITGB2 is a receptor for F11R. Integrin ITGAL/ITGB2 is a receptor for the secreted form of ubiquitin-like protein ISG15; the interaction is mediated by ITGAL. Involved in a variety of immune phenomena including leukocyte-endothelial cell interaction, cytotoxic T-cell mediated killing, and antibody dependent killing by granulocytes and monocytes. Contributes to natural killer cell cytotoxicity. Involved in leukocyte adhesion and transmigration of leukocytes including T-cells and neutrophils. Acts as a platform at the immunological synapse to translate TCR engagement and density of the ITGAL ligand ICAM1 into graded adhesion. Required for generation of common lymphoid progenitor cells in bone marrow, indicating the role in lymphopoiesis. Integrin ITGAL/ITGB2 in association with ICAM3, contributes to apoptotic neutrophil phagocytosis by macrophages. In Mus musculus (Mouse), this protein is Integrin alpha-L.